We begin with the raw amino-acid sequence, 356 residues long: D-alanine--D-alanine ligase (356 aa).

An ATP-grasp domain is found at 134–339 (KQLFEHRGLP…YPELITKLIE (206 aa)). 167–222 (NDKLNYPVFVKPANLGSSVGISKCNNEAELKEGIKEAFQFDRKLVIEQGVNAREIE) provides a ligand contact to ATP. Residues D293, E306, and N308 each contribute to the Mg(2+) site.

It belongs to the D-alanine--D-alanine ligase family. Mg(2+) serves as cofactor. It depends on Mn(2+) as a cofactor.

It localises to the cytoplasm. The catalysed reaction is 2 D-alanine + ATP = D-alanyl-D-alanine + ADP + phosphate + H(+). It functions in the pathway cell wall biogenesis; peptidoglycan biosynthesis. Its function is as follows. Cell wall formation. The chain is D-alanine--D-alanine ligase from Staphylococcus aureus (strain MSSA476).